A 118-amino-acid chain; its full sequence is Small ribosomal subunit protein mS37 (118 aa).

Positions 42-84 (EATCITEMSMMMACWKQNEFRDEACRKEIQDFFDCSSRAQEAR) constitute a CHCH domain. 2 consecutive short sequence motifs (cx9C motif) follow at residues 45–55 (CITEMSMMMAC) and 66–76 (CRKEIQDFFDC). 2 disulfide bridges follow: cysteine 45–cysteine 76 and cysteine 55–cysteine 66. A disordered region spans residues 86-105 (MRSIQESLGQSESLSPHKMT). The span at 89 to 99 (IQESLGQSESL) shows a compositional bias: polar residues.

The protein belongs to the mitochondrion-specific ribosomal protein mS37 family. As to quaternary structure, component of the mitochondrial ribosome small subunit (28S) which comprises a 12S rRNA and about 30 distinct proteins.

The protein resides in the mitochondrion. Its subcellular location is the nucleus. In Mus musculus (Mouse), this protein is Small ribosomal subunit protein mS37 (Chchd1).